The primary structure comprises 203 residues: MIKSVTLRSFHLPIEFNDTKFVSRPCFLARSFPVVRCSSTRDVPKLELFSRGKFDRILQDPPLIEKAESELSDYCSTLEGDDSYSCWRAYFELKDLEREKPKVEVENLILQTGGLKSLIGCLHGVASMEKDNKTKNGLHVGEESDREKGMNLHIHIPDGLPKSEQELEEEEKSKMPDSAFTRLLRSKGTIPAWFSHAPDHETD.

The segment at 156–178 is disordered; that stretch reads IPDGLPKSEQELEEEEKSKMPDS. Residues 161–175 are compositionally biased toward basic and acidic residues; sequence PKSEQELEEEEKSKM.

Homotetramer. Interacts with MEE12/CCG, MED7A, MED7B, MED9, AGL49, AGL53, AGL75, AGL80, AGL81, AGL82, AGL103 and NRPB1 (via CTD). In terms of tissue distribution, expressed in roots, leaves, stems and flowers. Expressed in the central cell of mature ovules.

Its subcellular location is the nucleus. The protein resides in the cytoplasm. Required for the development of the one-cell zygote and endosperm in embryos. Required for micropylar pollen tube guidance, but has no effect on ovule development and gametophytic cell fate specification. May connect transcription factors and the Pol II machinery to regulate pollen tube attraction, via its interactions with AGAMOUS-like (AGL) transcription factors, MEE14/CCG and the Mediator complex. The polypeptide is CCG-binding protein 1 (Arabidopsis thaliana (Mouse-ear cress)).